The sequence spans 950 residues: Valine--tRNA ligase, mitochondrial (950 aa).

Residues 1 to 90 (MFHFQRSFSS…ITIQDALARF (90 aa)) constitute a mitochondrion transit peptide. The 'HIGH' region signature appears at 67 to 77 (PNITGKLHIGH). Positions 556–560 (KMSKS) match the 'KMSKS' region motif. Lys559 serves as a coordination point for ATP.

Belongs to the class-I aminoacyl-tRNA synthetase family.

It localises to the mitochondrion. It catalyses the reaction tRNA(Val) + L-valine + ATP = L-valyl-tRNA(Val) + AMP + diphosphate. The protein is Valine--tRNA ligase, mitochondrial (vas1) of Schizosaccharomyces pombe (strain 972 / ATCC 24843) (Fission yeast).